Consider the following 713-residue polypeptide: Ribosomal RNA large subunit methyltransferase K/L (713 aa).

In terms of domain architecture, THUMP spans 43-154 (LAYRITLWTR…NGVITIAMNF (112 aa)).

This sequence belongs to the methyltransferase superfamily. RlmKL family.

It is found in the cytoplasm. The catalysed reaction is guanosine(2445) in 23S rRNA + S-adenosyl-L-methionine = N(2)-methylguanosine(2445) in 23S rRNA + S-adenosyl-L-homocysteine + H(+). The enzyme catalyses guanosine(2069) in 23S rRNA + S-adenosyl-L-methionine = N(2)-methylguanosine(2069) in 23S rRNA + S-adenosyl-L-homocysteine + H(+). In terms of biological role, specifically methylates the guanine in position 2445 (m2G2445) and the guanine in position 2069 (m7G2069) of 23S rRNA. This is Ribosomal RNA large subunit methyltransferase K/L from Shewanella sp. (strain MR-4).